Reading from the N-terminus, the 726-residue chain is Sensory/regulatory protein RpfC (726 aa).

Topologically, residues 1 to 22 (MKSPLPWLKRRLSGRADSEHAQ) are periplasmic. The segment at 1 to 22 (MKSPLPWLKRRLSGRADSEHAQ) is sensor. The helical transmembrane segment at 23–40 (NLIRIIITTLFISYLGWR) threads the bilayer. At 41-51 (YQHTHGDTLMA) the chain is on the cytoplasmic side. The chain crosses the membrane as a helical span at residues 52–72 (TWLILVGELLVSLGLMVAILL). Topologically, residues 73-94 (RPQVSHTRRLIGMLLDYTCTGA) are periplasmic. The helical transmembrane segment at 95–115 (IMAIQGEPASPLYAVCMWVTI) threads the bilayer. The Cytoplasmic portion of the chain corresponds to 116 to 127 (GNGLRYGSNYLR). Residues 128-148 (AATAMGSLCFLGAILISPYWK) traverse the membrane as a helical segment. At 149–151 (ANP) the chain is on the periplasmic side. Residues 152–172 (YLSWGLLLGLIAVPLYFDSLL) traverse the membrane as a helical segment. The Cytoplasmic segment spans residues 173-726 (RAMTRAVREA…DGECSPRSNE (554 aa)). One can recognise a Histidine kinase domain in the interval 195–417 (NMSHEFRTPL…VFWFELPMAI (223 aa)). At His198 the chain carries Phosphohistidine; by autocatalysis. The Response regulatory domain maps to 463–581 (RMLVADDHEA…KLLDTLADLA (119 aa)). Asp512 carries the 4-aspartylphosphate modification. Residues 618-711 (GEEFERQFVR…KAGKDALDAR (94 aa)) enclose the HPt domain. His657 bears the Phosphohistidine mark.

As to quaternary structure, at low DSF concentrations, interacts with RpfF. Post-translationally, autophosphorylated. Activation may require a sequential transfer of a phosphate group from a His in the primary transmitter domain, to an Asp in the receiver domain and to a His in the secondary transmitter domain.

Its subcellular location is the cell inner membrane. It catalyses the reaction ATP + protein L-histidine = ADP + protein N-phospho-L-histidine.. Binding of DSF to the sensor region causes allosteric change, which facilitates RpfC autophosphorylation. Hybrid sensor kinase that regulates diverse biological functions through two distinct molecular mechanisms. At low cell density, the extracellular concentration of the diffusible signaling factor (DSF) is below a threshold, and unphosphorylated RpfC is involved in the negative regulation of DSF synthesis, via direct interaction with the DSF synthase RpfF. Interaction prevents synthesis of DSF, which remains at a basal level. This activity does not involve the phosphorelay mechanism and is not dependent on RpfG. Is also member of the two-component regulatory system RpfG/RpfC, which is involved in the perception and response to DSF, which is essential for cell-cell signaling. At high cell density, the level of extracellular DSF increases and binding of DSF to the sensor region of RpfC causes autophosphorylation of RpfC, which results in the release of RpfF and the activation of RpfG via a four-step phosphorelay. Activation of RpfG leads to the positive regulation of biofilm dispersal and the production of virulence factors. This is Sensory/regulatory protein RpfC (rpfC) from Xanthomonas campestris pv. campestris (strain 8004).